The sequence spans 344 residues: C5a anaphylatoxin chemotactic receptor 2 (344 aa).

The Extracellular portion of the chain corresponds to 1 to 44 (MMNHTTSEYYDYEYDHEHYSDLPDVPVDCPAGTCFTSDVYLIVL). N-linked (GlcNAc...) asparagine glycosylation occurs at Asn3. A helical membrane pass occupies residues 45–67 (LVLYAAVFLVGVPGNTLVAWVTW). At 68 to 78 (KESRHRLGASW) the chain is on the cytoplasmic side. The chain crosses the membrane as a helical span at residues 79-101 (FLHLTMADLLCCVSLPFLAVPIA). At 102–120 (QKGHWPYGAAGCWLLSSIT) the chain is on the extracellular side. Cysteines 113 and 192 form a disulfide. Residues 121 to 143 (ILSMYASVLLLTGLSGDLFLLAF) traverse the membrane as a helical segment. At 144–155 (RPSWKGADHRTF) the chain is on the cytoplasmic side. The chain crosses the membrane as a helical span at residues 156–178 (GVRVVQASSWMLGLLLTVPSAVY). Residues 179-208 (RRLLQEHYPPRLVCGIDYGGSVSAEVAITT) are Extracellular-facing. The helical transmembrane segment at 209–231 (VRFLFGFLGPLVFMAGCHGILQR) threads the bilayer. At 232-243 (QMARRHWPLGTA) the chain is on the cytoplasmic side. A helical transmembrane segment spans residues 244–266 (VVVGFFICWTPYHVLRVIIAAAP). The Extracellular segment spans residues 267–280 (PHSLLLARVLEAEP). Residues 281-300 (LFNGLALAHSALNPIMFLYF) form a helical membrane-spanning segment. At 301 to 344 (GRKQLCKSLQAACHWALRDPQDEESAVTKVSISTSHEMVSEMPV) the chain is on the cytoplasmic side. The residue at position 325 (Ser325) is a Phosphoserine.

Belongs to the G-protein coupled receptor 1 family. As to quaternary structure, interacts with C3 (the anaphylatoxin peptide C3a and the adipogenic hormone ASP); the interaction occurs with higher affinity for ASP, enhancing the phosphorylation and activation of GPR77, recruitment of ARRB2 to the cell surface and endocytosis of GRP77. In terms of tissue distribution, highly expressed in liver and spleen. Lower levels in intestine, brain and kidney. Also expressed in adipose tissues with highest levels in gonadal and ingual fat depots. Lower levels in brown tissue.

It localises to the cell membrane. Functionally, receptor for the chemotactic and inflammatory C3a, C4a and C5a anaphylatoxin peptides and also for their dearginated forms ASP/C3adesArg, C4adesArg and C5adesArg respectively. Couples weakly to G(i)-mediated signaling pathways. The protein is C5a anaphylatoxin chemotactic receptor 2 (C5ar2) of Mus musculus (Mouse).